A 116-amino-acid chain; its full sequence is Iron-sulfur cluster insertion protein ErpA (116 aa).

Cys44, Cys108, and Cys110 together coordinate iron-sulfur cluster.

Belongs to the HesB/IscA family. As to quaternary structure, homodimer. Requires iron-sulfur cluster as cofactor.

Functionally, required for insertion of 4Fe-4S clusters for at least IspG. This Pseudomonas fluorescens (strain ATCC BAA-477 / NRRL B-23932 / Pf-5) protein is Iron-sulfur cluster insertion protein ErpA.